We begin with the raw amino-acid sequence, 135 residues long: ATP synthase epsilon chain (135 aa).

This sequence belongs to the ATPase epsilon chain family. As to quaternary structure, F-type ATPases have 2 components, CF(1) - the catalytic core - and CF(0) - the membrane proton channel. CF(1) has five subunits: alpha(3), beta(3), gamma(1), delta(1), epsilon(1). CF(0) has three main subunits: a, b and c.

The protein resides in the cell inner membrane. In terms of biological role, produces ATP from ADP in the presence of a proton gradient across the membrane. The chain is ATP synthase epsilon chain from Rhodopseudomonas palustris (strain BisB18).